A 326-amino-acid chain; its full sequence is MDQNNSLPPYAQGLASPQGAMTPGIPIFSPMMPYGTGLTPQPIQNTNSLSILEEQQRQQQQQQQQQQQQQQQQQQQQQQQQQAVAAAAVQQSTSQQTTQGTSGQAPQLFHSQTLTTAPLPGTTPLYPSPVTPMTPITPATPASESSGIVPQLQNIVSTVNLGCKLDLKTIALRARNAEYNPKRFAAVIMRIREPRTTALIFSSGKMVCTGAKSEEQSRLAARKYARVVQKLGFPAKFLDFKIQNMVGSCDVKFPIRLEGLVLTHQQFSSYEPELFPGLIYRMIKPRIVLLIFVSGKVVLTGAKVRAEIYEAFENIYPILKGFRKTT.

Disordered stretches follow at residues 1–21 and 114–146; these read MDQN…QGAM and LTTA…SESS. Low complexity predominate over residues 114–125; it reads LTTAPLPGTTPL. Tandem repeats lie at residues 152 to 228 and 242 to 319. Residues N154, R190, K205, N244, and R281 each contribute to the DNA site.

This sequence belongs to the TBP family. Binds DNA as monomer. Belongs to the TFIID complex together with the TBP-associated factors (TAFs). Part of a TFIID-containing RNA polymerase II pre-initiation complex that is composed of TBP and at least GTF2A1, GTF2A2, GTF2E1, GTF2E2, GTF2F1, GTF2H2, GTF2H3, GTF2H4, GTF2H5, GTF2B, TCEA1, ERCC2, ERCC3, TAF1, TAF2, TAF3, TAF4, TAF5, TAF6, TAF7, TAF8, TAF9, TAF10, TAF11, TAF12 and TAF13. Component of the transcription factor SL1/TIF-IB complex, composed of TBP and at least TAF1A, TAF1B, TAF1C and TAF1D. Association of TBP to form either TFIID or SL1/TIF-IB appears to be mutually exclusive. Interacts with TAF1A, TAF1B and TAF1C. Interacts with TFIIB, NCOA6, DRAP1, DR1 and ELF3. Interacts with SPIB, SNAPC1, SNAPC2 and SNAPC4. Interacts with UTF1. Interacts with BRF2; this interaction promotes recruitment of BRF2 to TATA box-containing promoters. Interacts with UBTF. Interacts with GPBP1. Interacts with CITED2. Interacts with ATF7IP. Interacts with LLPH. Interacts with HSF1 (via transactivation domain). Interacts with GTF2B (via C-terminus); this interaction with promoter-bound TBP guides RNA polymerase II into the pre-initiation complex (PIC). Interacts with PAX5. Interacts with MSX1; the interaction may inhibit MSX1 autoinactivation.

It localises to the nucleus. Functionally, general transcription factor that functions at the core of the DNA-binding multiprotein factor TFIID. Binding of TFIID to the TATA box is the initial transcriptional step of the pre-initiation complex (PIC), playing a role in the activation of eukaryotic genes transcribed by RNA polymerase II. Component of a BRF2-containing transcription factor complex that regulates transcription mediated by RNA polymerase III. Component of the transcription factor SL1/TIF-IB complex, which is involved in the assembly of the PIC (pre-initiation complex) during RNA polymerase I-dependent transcription. The rate of PIC formation probably is primarily dependent on the rate of association of SL1 with the rDNA promoter. SL1 is involved in stabilization of nucleolar transcription factor 1/UBTF on rDNA. This is TATA-box-binding protein (TBP) from Macaca fascicularis (Crab-eating macaque).